Reading from the N-terminus, the 199-residue chain is Glycerol-3-phosphate acyltransferase (199 aa).

Helical transmembrane passes span 3–23, 55–75, 79–99, 113–133, and 155–175; these read IKIL…AYIV, VITL…ATFI, FSYS…TIFL, VFFA…GLAF, and YFLG…LLII.

It belongs to the PlsY family. Probably interacts with PlsX.

The protein resides in the cell inner membrane. It catalyses the reaction an acyl phosphate + sn-glycerol 3-phosphate = a 1-acyl-sn-glycero-3-phosphate + phosphate. Its pathway is lipid metabolism; phospholipid metabolism. Its function is as follows. Catalyzes the transfer of an acyl group from acyl-phosphate (acyl-PO(4)) to glycerol-3-phosphate (G3P) to form lysophosphatidic acid (LPA). This enzyme utilizes acyl-phosphate as fatty acyl donor, but not acyl-CoA or acyl-ACP. The polypeptide is Glycerol-3-phosphate acyltransferase (Endomicrobium trichonymphae).